The following is a 225-amino-acid chain: MNTSLTNAARLFTAGLRALLVLTVVTGIVYPLVVTGVAQGLFPGKANGSEIKADGKVVGSSLIGQSYNLPLKEGRETPEPDLRWFQGRPANGLGTNTVNTRYELILSGATNRSADDPELLQWVQDAKAAVVRDNSVPGHPVRPEDVPADAVTSSGSGLDPDISPRYADLQVHRVAAKNGLPAERVQELVDEHTTPRTLGFIGEPRVNVLELNIALVELVAPGAGH.

The chain crosses the membrane as a helical span at residues 18-38 (ALLVLTVVTGIVYPLVVTGVA). The tract at residues 134–161 (NSVPGHPVRPEDVPADAVTSSGSGLDPD) is disordered.

Belongs to the KdpC family. As to quaternary structure, the system is composed of three essential subunits: KdpA, KdpB and KdpC.

The protein localises to the cell membrane. Part of the high-affinity ATP-driven potassium transport (or Kdp) system, which catalyzes the hydrolysis of ATP coupled with the electrogenic transport of potassium into the cytoplasm. This subunit acts as a catalytic chaperone that increases the ATP-binding affinity of the ATP-hydrolyzing subunit KdpB by the formation of a transient KdpB/KdpC/ATP ternary complex. In Streptomyces coelicolor (strain ATCC BAA-471 / A3(2) / M145), this protein is Potassium-transporting ATPase KdpC subunit.